Reading from the N-terminus, the 490-residue chain is Cobyric acid synthase (490 aa).

In terms of domain architecture, GATase cobBQ-type spans 252-428 (ARRVAVVRLP…WHGAFEGDAL (177 aa)). Cysteine 333 (nucleophile) is an active-site residue. Histidine 420 is an active-site residue.

This sequence belongs to the CobB/CobQ family. CobQ subfamily.

The protein operates within cofactor biosynthesis; adenosylcobalamin biosynthesis. Its function is as follows. Catalyzes amidations at positions B, D, E, and G on adenosylcobyrinic A,C-diamide. NH(2) groups are provided by glutamine, and one molecule of ATP is hydrogenolyzed for each amidation. The sequence is that of Cobyric acid synthase from Mycolicibacterium vanbaalenii (strain DSM 7251 / JCM 13017 / BCRC 16820 / KCTC 9966 / NRRL B-24157 / PYR-1) (Mycobacterium vanbaalenii).